We begin with the raw amino-acid sequence, 118 residues long: Small ribosomal subunit protein uS13 (118 aa).

Positions 94–118 (SLPLRGQRTKTNARTRKGPRKAIKK) are disordered.

This sequence belongs to the universal ribosomal protein uS13 family. In terms of assembly, part of the 30S ribosomal subunit. Forms a loose heterodimer with protein S19. Forms two bridges to the 50S subunit in the 70S ribosome.

Located at the top of the head of the 30S subunit, it contacts several helices of the 16S rRNA. In the 70S ribosome it contacts the 23S rRNA (bridge B1a) and protein L5 of the 50S subunit (bridge B1b), connecting the 2 subunits; these bridges are implicated in subunit movement. Contacts the tRNAs in the A and P-sites. The protein is Small ribosomal subunit protein uS13 of Pseudoalteromonas atlantica (strain T6c / ATCC BAA-1087).